The following is a 333-amino-acid chain: Geminin coiled-coil domain-containing protein 1 (333 aa).

Residues 83–118 (QLYRNKQLQDTLLQKEEELARLHEENNHLRQYLNST) adopt a coiled-coil conformation. Over residues 145–154 (KEKRKPKEHR) the composition is skewed to basic residues. A disordered region spans residues 145–165 (KEKRKPKEHRHSPAEIPQFKT).

This sequence belongs to the GEMC1 family. In terms of processing, highly phosphorylated by CDK2; stimulates initiation of DNA replication.

It localises to the nucleus. Its function is as follows. Regulator of DNA replication. Promotes initiation of chromosomal DNA replication by mediating TOPBP1- and CDK2-dependent recruitment of CDC45L onto replication origins. This chain is Geminin coiled-coil domain-containing protein 1 (Gmnc), found in Mus musculus (Mouse).